We begin with the raw amino-acid sequence, 123 residues long: Large ribosomal subunit protein uL14 (123 aa).

It belongs to the universal ribosomal protein uL14 family. In terms of assembly, part of the 50S ribosomal subunit. Forms a cluster with proteins L3 and L19. In the 70S ribosome, L14 and L19 interact and together make contacts with the 16S rRNA in bridges B5 and B8.

Functionally, binds to 23S rRNA. Forms part of two intersubunit bridges in the 70S ribosome. In Buchnera aphidicola subsp. Cinara cedri (strain Cc), this protein is Large ribosomal subunit protein uL14.